Reading from the N-terminus, the 251-residue chain is Protein crossbronx (251 aa).

Positions 20–176 constitute a UBC core domain; the sequence is QQEYKILAEY…TRENIRESLA (157 aa). Residues 211–251 are disordered; it reads QSKHLESQSQQSNNGGNGGGGGAATGLSWVKEGEFKPLSVE. Gly residues predominate over residues 225–234; it reads GGNGGGGGAA.

The protein belongs to the ubiquitin-conjugating enzyme family. FTS subfamily.

The polypeptide is Protein crossbronx (cbx) (Drosophila willistoni (Fruit fly)).